A 59-amino-acid chain; its full sequence is Potassium channel toxin alpha-KTx 4.5 (59 aa).

The N-terminal stretch at 1-22 (MKAFYGVLIIFILISMLDLSQQ) is a signal peptide. 3 disulfide bridges follow: C29/C50, C35/C55, and C39/C57. The interval 48-55 (GKCMNGKC) is interaction with Ca(2+)-activated K(+) channels.

Expressed by the venom gland.

The protein resides in the secreted. Inhibits with low potency Kv1.1/KCNA1, Kv1.2/KCNA2, Kv1.3/KCNA3 and Kv11.1/KCNH2/ERG1 voltage-gated potassium channels. The polypeptide is Potassium channel toxin alpha-KTx 4.5 (Tityus costatus (Brazilian scorpion)).